Here is a 388-residue protein sequence, read N- to C-terminus: Succinate--CoA ligase [ADP-forming] subunit beta (388 aa).

The ATP-grasp domain maps to 9 to 244 (KQLFARYGLP…QSQEDPREAQ (236 aa)). ATP contacts are provided by residues Lys46, 53–55 (GRG), Glu99, Thr102, and Glu107. Positions 199 and 213 each coordinate Mg(2+). Substrate contacts are provided by residues Asn264 and 321-323 (GIV).

This sequence belongs to the succinate/malate CoA ligase beta subunit family. As to quaternary structure, heterotetramer of two alpha and two beta subunits. The cofactor is Mg(2+).

The enzyme catalyses succinate + ATP + CoA = succinyl-CoA + ADP + phosphate. The catalysed reaction is GTP + succinate + CoA = succinyl-CoA + GDP + phosphate. It participates in carbohydrate metabolism; tricarboxylic acid cycle; succinate from succinyl-CoA (ligase route): step 1/1. Succinyl-CoA synthetase functions in the citric acid cycle (TCA), coupling the hydrolysis of succinyl-CoA to the synthesis of either ATP or GTP and thus represents the only step of substrate-level phosphorylation in the TCA. The beta subunit provides nucleotide specificity of the enzyme and binds the substrate succinate, while the binding sites for coenzyme A and phosphate are found in the alpha subunit. The polypeptide is Succinate--CoA ligase [ADP-forming] subunit beta (Klebsiella pneumoniae (strain 342)).